We begin with the raw amino-acid sequence, 119 residues long: Protein TusC (119 aa).

It belongs to the DsrF/TusC family. In terms of assembly, heterohexamer, formed by a dimer of trimers. The hexameric TusBCD complex contains 2 copies each of TusB, TusC and TusD. The TusBCD complex interacts with TusE.

Its subcellular location is the cytoplasm. Part of a sulfur-relay system required for 2-thiolation of 5-methylaminomethyl-2-thiouridine (mnm(5)s(2)U) at tRNA wobble positions. The sequence is that of Protein TusC from Escherichia coli O45:K1 (strain S88 / ExPEC).